Consider the following 191-residue polypeptide: Lipid A acyltransferase PagP (191 aa).

An N-terminal signal peptide occupies residues 1-23 (MRLFYQRISLLISLCGFFSAAWA). Residues histidine 62, aspartate 105, and serine 106 contribute to the active site.

Belongs to the lipid A palmitoyltransferase family. In terms of assembly, homodimer.

The protein localises to the cell outer membrane. The enzyme catalyses a lipid A + a 1,2-diacyl-sn-glycero-3-phosphocholine = a hepta-acyl lipid A + a 2-acyl-sn-glycero-3-phosphocholine. It carries out the reaction a lipid IVA + a 1,2-diacyl-sn-glycero-3-phosphocholine = a lipid IVB + a 2-acyl-sn-glycero-3-phosphocholine. It catalyses the reaction a lipid IIA + a 1,2-diacyl-sn-glycero-3-phosphocholine = a lipid IIB + a 2-acyl-sn-glycero-3-phosphocholine. Transfers a fatty acid residue from the sn-1 position of a phospholipid to the N-linked hydroxyfatty acid chain on the proximal unit of lipid A or its precursors. The sequence is that of Lipid A acyltransferase PagP from Sodalis glossinidius (strain morsitans).